A 527-amino-acid chain; its full sequence is Baeyer-Villiger monooxygenase (527 aa).

FAD contacts are provided by residues Ser-36, Glu-56, Thr-64–Val-67, Asp-76, Tyr-82, and Ile-125. NADP(+) is bound at residue Ala-74 to Asp-76. Residues Thr-199 to Gln-205, Arg-222 to Thr-223, and Lys-308 to Arg-309 contribute to the NADP(+) site. Residue Met-415 participates in FAD binding.

Belongs to the FAD-binding monooxygenase family. It depends on FAD as a cofactor.

Its function is as follows. Catalyzes a Baeyer-Villiger oxidation reaction, i.e. the insertion of an oxygen atom into a carbon-carbon bond adjacent to a carbonyl, which converts ketones to esters or lactones using NADPH and/or NADH as an electron donor. Thus, can convert bicyclo[3.2.0]hept-2-en-6-one into the oxidative lactone products 2-oxabicyclo[3.3.0]oct-6-en-3-one and 3-oxabicyclo[3.3.0]oct-6-en-2-one. Is also able to catalyze the sulfoxidation of methyl phenyl sulfide (thioanisole). In Pseudomonas aeruginosa (strain ATCC 15692 / DSM 22644 / CIP 104116 / JCM 14847 / LMG 12228 / 1C / PRS 101 / PAO1), this protein is Baeyer-Villiger monooxygenase.